We begin with the raw amino-acid sequence, 61 residues long: Statherin (61 aa).

An N-terminal signal peptide occupies residues Met1–Xaa19. The interval Asp20 to Lys25 is hydroxyapatite-binding; inhibits crystal growth. A phosphoserine mark is found at Ser21 and Ser22. The interval Arg37–Tyr61 is disordered. The tract at residues Arg37–Tyr61 is hydrophobic; inhibits precipitation of calcium phosphate salts. A compositionally biased stretch (pro residues) spans Pro43–Tyr61.

It belongs to the histatin/statherin family. In terms of tissue distribution, secreted by parotid and submandibular glands.

The protein resides in the secreted. In terms of biological role, salivary protein that stabilizes saliva supersaturated with calcium salts by inhibiting the precipitation of calcium phosphate salts. It also modulates hydroxyapatite crystal formation on the tooth surface. This is Statherin (STATH) from Macaca fascicularis (Crab-eating macaque).